The primary structure comprises 224 residues: Adenosylcobinamide-GDP ribazoletransferase (224 aa).

4 consecutive transmembrane segments (helical) span residues 21–41, 44–64, 97–117, and 156–176; these read LSFK…AAIP, LLYL…ATGL, GGIF…HSPL, and WPAA…TTAV.

Belongs to the CobS family. It depends on Mg(2+) as a cofactor.

The protein localises to the cell membrane. It carries out the reaction alpha-ribazole + adenosylcob(III)inamide-GDP = adenosylcob(III)alamin + GMP + H(+). It catalyses the reaction alpha-ribazole 5'-phosphate + adenosylcob(III)inamide-GDP = adenosylcob(III)alamin 5'-phosphate + GMP + H(+). Its pathway is cofactor biosynthesis; adenosylcobalamin biosynthesis; adenosylcobalamin from cob(II)yrinate a,c-diamide: step 7/7. Functionally, joins adenosylcobinamide-GDP and alpha-ribazole to generate adenosylcobalamin (Ado-cobalamin). Also synthesizes adenosylcobalamin 5'-phosphate from adenosylcobinamide-GDP and alpha-ribazole 5'-phosphate. This chain is Adenosylcobinamide-GDP ribazoletransferase, found in Pyrobaculum aerophilum (strain ATCC 51768 / DSM 7523 / JCM 9630 / CIP 104966 / NBRC 100827 / IM2).